The chain runs to 267 residues: Cytokinesis defective protein 7 (267 aa).

Positions 244-267 (RNQADQSILPPSGDQQHHRSELHA) are disordered. Residues 258 to 267 (QQHHRSELHA) are compositionally biased toward basic and acidic residues.

This chain is Cytokinesis defective protein 7, found in Caenorhabditis elegans.